Consider the following 607-residue polypeptide: Cytosolic Fe-S cluster assembly factor NAR1 (607 aa).

Residues Cys-20, Cys-82, Cys-85, Cys-88, Cys-204, and Cys-259 each contribute to the [4Fe-4S] cluster site. The interval 430–476 (KPNTGKSTNTTTTTTKSKVNPLAARRRARIANNRGKPETKSTSEVNS) is disordered. The span at 432 to 447 (NTGKSTNTTTTTTKSK) shows a compositional bias: low complexity. The [4Fe-4S] cluster site is built by Cys-496 and Cys-500.

It belongs to the NARF family.

In terms of biological role, component of the cytosolic Fe/S protein assembly machinery. Required for maturation of extramitochondrial Fe/S proteins. May play a role in the transfer of pre-assembled Fe/S clusters to target apoproteins. The polypeptide is Cytosolic Fe-S cluster assembly factor NAR1 (NAR1) (Candida albicans (strain SC5314 / ATCC MYA-2876) (Yeast)).